The primary structure comprises 1414 residues: DNA-directed RNA polymerase subunit beta' (1414 aa).

Residues Cys70, Cys72, Cys85, and Cys88 each contribute to the Zn(2+) site. Residues Asp460, Asp462, and Asp464 each contribute to the Mg(2+) site. Positions 814, 888, 895, and 898 each coordinate Zn(2+). Residues 1392–1403 (EQALSEALKSSA) show a composition bias toward low complexity. The disordered stretch occupies residues 1392–1414 (EQALSEALKSSAPQEAKAAQKDE).

Belongs to the RNA polymerase beta' chain family. The RNAP catalytic core consists of 2 alpha, 1 beta, 1 beta' and 1 omega subunit. When a sigma factor is associated with the core the holoenzyme is formed, which can initiate transcription. The cofactor is Mg(2+). Zn(2+) serves as cofactor.

It carries out the reaction RNA(n) + a ribonucleoside 5'-triphosphate = RNA(n+1) + diphosphate. In terms of biological role, DNA-dependent RNA polymerase catalyzes the transcription of DNA into RNA using the four ribonucleoside triphosphates as substrates. The polypeptide is DNA-directed RNA polymerase subunit beta' (Coxiella burnetii (strain Dugway 5J108-111)).